Reading from the N-terminus, the 154-residue chain is uncharacterized protein (154 aa).

Position 47 is a phosphoserine (Ser-47).

This sequence to yeast YPL229w.

This is an uncharacterized protein from Saccharomyces cerevisiae (strain ATCC 204508 / S288c) (Baker's yeast).